We begin with the raw amino-acid sequence, 440 residues long: Chromosome partition protein MukF (440 aa).

The interval 208-236 is leucine-zipper; the sequence is LSETSGTLRELQDTLDAAGDKLQANLLRI.

This sequence belongs to the MukF family. In terms of assembly, interacts, and probably forms a ternary complex, with MukE and MukB via its C-terminal region. The complex formation is stimulated by calcium or magnesium. It is required for an interaction between MukE and MukB.

It is found in the cytoplasm. It localises to the nucleoid. In terms of biological role, involved in chromosome condensation, segregation and cell cycle progression. May participate in facilitating chromosome segregation by condensation DNA from both sides of a centrally located replisome during cell division. Not required for mini-F plasmid partitioning. Probably acts via its interaction with MukB and MukE. Overexpression results in anucleate cells. It has a calcium binding activity. The protein is Chromosome partition protein MukF of Klebsiella pneumoniae subsp. pneumoniae (strain ATCC 700721 / MGH 78578).